The sequence spans 312 residues: Homoserine kinase (312 aa).

Residue 91–101 (PVASGLGSSAC) participates in ATP binding.

This sequence belongs to the GHMP kinase family. Homoserine kinase subfamily.

It is found in the cytoplasm. It carries out the reaction L-homoserine + ATP = O-phospho-L-homoserine + ADP + H(+). It participates in amino-acid biosynthesis; L-threonine biosynthesis; L-threonine from L-aspartate: step 4/5. In terms of biological role, catalyzes the ATP-dependent phosphorylation of L-homoserine to L-homoserine phosphate. In Blochmanniella pennsylvanica (strain BPEN), this protein is Homoserine kinase.